The chain runs to 382 residues: Mannitol-1-phosphate 5-dehydrogenase (382 aa).

3–14 (ALHFGAGNIGRG) contributes to the NAD(+) binding site. K269 bears the N6-acetyllysine mark.

It belongs to the mannitol dehydrogenase family.

It catalyses the reaction D-mannitol 1-phosphate + NAD(+) = beta-D-fructose 6-phosphate + NADH + H(+). The sequence is that of Mannitol-1-phosphate 5-dehydrogenase from Shigella boydii serotype 18 (strain CDC 3083-94 / BS512).